Consider the following 148-residue polypeptide: uncharacterized protein (148 aa).

The segment covering 36 to 45 (PGAPSAGPMS) has biased composition (low complexity). A disordered region spans residues 36 to 148 (PGAPSAGPMS…SGTAFFPGTT (113 aa)). Residues 46–55 (DSNSKGSTPR) are compositionally biased toward polar residues.

This is an uncharacterized protein from Bovine leukemia virus (isolate Japanese BLV-1) (BLV).